A 290-amino-acid chain; its full sequence is Flap endonuclease Xni (290 aa).

D125 provides a ligand contact to Mg(2+). One can recognise a 5'-3' exonuclease domain in the interval 181-275; that stretch reads VKTSQLIDFW…DIRLTTSSSA (95 aa). Positions 192, 203, and 206 each coordinate K(+). Residues 205–210 are interaction with DNA; that stretch reads GIGQVT.

This sequence belongs to the Xni family. Mg(2+) is required as a cofactor. It depends on K(+) as a cofactor.

Functionally, has flap endonuclease activity. During DNA replication, flap endonucleases cleave the 5'-overhanging flap structure that is generated by displacement synthesis when DNA polymerase encounters the 5'-end of a downstream Okazaki fragment. In Colwellia psychrerythraea (strain 34H / ATCC BAA-681) (Vibrio psychroerythus), this protein is Flap endonuclease Xni.